The chain runs to 57 residues: U13-myrmicitoxin-Mri1a (57 aa).

Positions 1 to 23 (MKIIHVLLLVAVVAITMSPSIMA) are cleaved as a signal peptide. The propeptide occupies 24-29 (ESVAEA). Glutamate 56 is modified (glutamic acid 1-amide).

As to expression, expressed by the venom gland.

It localises to the secreted. In terms of biological role, induces paralysis 1 hour after injection into insects (blowfly L.caesar) but does not appear to be lethal. The protein is U13-myrmicitoxin-Mri1a of Manica rubida (European giant red ant).